The chain runs to 200 residues: MGNFFLFAMTLVVCSVIVLLTGVADSAVICSEPTNLAEQYSQYMANATVSNMLEYLESSTAGGVASDEEEQLIYGNRICPSSIKAITTDPKSSVFERTTCPYFLVASHLSTRYPKIITEARCKCSGCVPLEENGHSDLTRCEPVYRPVRVLSRTGNCVNGVYQYAAAVHMKQEGCTCVRKTEALSGSGSGSNGSDDPIPM.

An N-terminal signal peptide occupies residues 1 to 26 (MGNFFLFAMTLVVCSVIVLLTGVADS). Asn46 carries an N-linked (GlcNAc...) asparagine glycan. 2 disulfide bridges follow: Cys122-Cys175 and Cys127-Cys177. Asn192 is a glycosylation site (N-linked (GlcNAc...) asparagine).

The protein belongs to the IL-17 family. As to expression, expressed in several tissues including hemocytes, gills, mantle, adductor muscle, labial palps, digestive glands and heart with highest levels in gills and lowest levels in adductor muscle and heart.

Its subcellular location is the secreted. In Magallana gigas (Pacific oyster), this protein is Interleukin 17-like protein.